We begin with the raw amino-acid sequence, 123 residues long: Large ribosomal subunit protein bL12 (123 aa).

It belongs to the bacterial ribosomal protein bL12 family. Homodimer. Part of the ribosomal stalk of the 50S ribosomal subunit. Forms a multimeric L10(L12)X complex, where L10 forms an elongated spine to which 2 to 4 L12 dimers bind in a sequential fashion. Binds GTP-bound translation factors.

Forms part of the ribosomal stalk which helps the ribosome interact with GTP-bound translation factors. Is thus essential for accurate translation. This chain is Large ribosomal subunit protein bL12, found in Ectopseudomonas mendocina (strain ymp) (Pseudomonas mendocina).